We begin with the raw amino-acid sequence, 243 residues long: Thiocyanate hydrolase subunit gamma (243 aa).

Co(3+) is bound by residues Cys-128, Cys-131, Ser-132, and Cys-133. Cys-131 is modified (cysteine sulfinic acid (-SO2H)). Cys-133 bears the Cysteine sulfenic acid (-SOH) mark.

The protein belongs to the nitrile hydratase subunit alpha family. As to quaternary structure, heterododecamer consisting of 4 alpha, 4 beta, and 4 gamma subunits. The cofactor is Co(3+).

The enzyme catalyses thiocyanate + H2O + 2 H(+) = carbonyl sulfide + NH4(+). It functions in the pathway organosulfur degradation; thiocyanate degradation. Its function is as follows. Involved in the degradation of thiocyanate. This Thiobacillus thioparus protein is Thiocyanate hydrolase subunit gamma (scnC).